A 261-amino-acid polypeptide reads, in one-letter code: 1-(5-phosphoribosyl)-5-[(5-phosphoribosylamino)methylideneamino] imidazole-4-carboxamide isomerase (261 aa).

Residue Asp8 is the Proton acceptor of the active site. The active-site Proton donor is Asp139.

This sequence belongs to the HisA/HisF family.

Its subcellular location is the cytoplasm. It carries out the reaction 1-(5-phospho-beta-D-ribosyl)-5-[(5-phospho-beta-D-ribosylamino)methylideneamino]imidazole-4-carboxamide = 5-[(5-phospho-1-deoxy-D-ribulos-1-ylimino)methylamino]-1-(5-phospho-beta-D-ribosyl)imidazole-4-carboxamide. The protein operates within amino-acid biosynthesis; L-histidine biosynthesis; L-histidine from 5-phospho-alpha-D-ribose 1-diphosphate: step 4/9. The chain is 1-(5-phosphoribosyl)-5-[(5-phosphoribosylamino)methylideneamino] imidazole-4-carboxamide isomerase from Janthinobacterium sp. (strain Marseille) (Minibacterium massiliensis).